We begin with the raw amino-acid sequence, 294 residues long: S-methyl-5'-thioadenosine phosphorylase (294 aa).

Phosphate is bound by residues Ser16, 58 to 59 (RH), and 91 to 92 (SA). Residue Met189 coordinates substrate. Thr190 is a phosphate binding site. Residue 213 to 215 (DFD) participates in substrate binding.

This sequence belongs to the PNP/MTAP phosphorylase family. MTAP subfamily. Homohexamer. Dimer of a homotrimer.

It catalyses the reaction S-methyl-5'-thioadenosine + phosphate = 5-(methylsulfanyl)-alpha-D-ribose 1-phosphate + adenine. It carries out the reaction 5'-deoxyadenosine + phosphate = 5-deoxy-alpha-D-ribose 1-phosphate + adenine. It functions in the pathway amino-acid biosynthesis; L-methionine biosynthesis via salvage pathway; S-methyl-5-thio-alpha-D-ribose 1-phosphate from S-methyl-5'-thioadenosine (phosphorylase route): step 1/1. In terms of biological role, catalyzes the reversible phosphorylation of S-methyl-5'-thioadenosine (MTA) to adenine and 5-methylthioribose-1-phosphate. Involved in the breakdown of MTA, a major by-product of polyamine biosynthesis. Responsible for the first step in the methionine salvage pathway after MTA has been generated from S-adenosylmethionine. Has broad substrate specificity with 6-aminopurine nucleosides as preferred substrates. Also catalyzes the phosphorylation of 5'-deoxyadenosine (5'dAdo) to 5-deoxyribose 1-phosphate. Part of a bifunctional DHAP-shunt salvage pathway for SAM by-products. The protein is S-methyl-5'-thioadenosine phosphorylase of Rhodospirillum rubrum (strain ATCC 11170 / ATH 1.1.1 / DSM 467 / LMG 4362 / NCIMB 8255 / S1).